The following is a 242-amino-acid chain: ADP-dependent L-serine kinase SerK (242 aa).

Residue Glu-30 is part of the active site. The ADP site is built by Ser-43, Ile-49, Trp-51, and Lys-52. Val-68 serves as a coordination point for O-phospho-L-serine. Residues Asp-69, Gly-70, His-71, His-72, and Arg-73 each contribute to the ADP site. Mg(2+) is bound at residue Asp-69. O-phospho-L-serine is bound by residues Gly-70, His-71, and His-72. Trp-102, Lys-221, Thr-223, and His-225 together coordinate O-phospho-L-serine.

The protein belongs to the SerK family. It depends on Mg(2+) as a cofactor.

The enzyme catalyses L-serine + ADP = O-phospho-L-serine + AMP + H(+). It participates in amino-acid biosynthesis; L-cysteine biosynthesis; L-cysteine from L-serine: step 1/2. Free serine kinase that uses ADP to phosphorylate L-serine to yield O-phospho-L-serine and AMP. The polypeptide is ADP-dependent L-serine kinase SerK (Thermococcus kodakarensis (strain ATCC BAA-918 / JCM 12380 / KOD1) (Pyrococcus kodakaraensis (strain KOD1))).